The chain runs to 120 residues: MAKDIEATERRKARVRRSLRARAYGKPRLSVFRSSKQIYCQIIDDGEGKTLVAASSLEKANREGLKTGATVEAAKIIGKLIAERAVQAGIKDVIFDRGAYMYHGRVKALADGAREGGLNF.

Belongs to the universal ribosomal protein uL18 family. Part of the 50S ribosomal subunit; part of the 5S rRNA/L5/L18/L25 subcomplex. Contacts the 5S and 23S rRNAs.

Its function is as follows. This is one of the proteins that bind and probably mediate the attachment of the 5S RNA into the large ribosomal subunit, where it forms part of the central protuberance. The chain is Large ribosomal subunit protein uL18 from Beijerinckia indica subsp. indica (strain ATCC 9039 / DSM 1715 / NCIMB 8712).